We begin with the raw amino-acid sequence, 980 residues long: Phosphoenolpyruvate carboxylase (980 aa).

Active-site residues include His-182 and Lys-625.

The protein belongs to the PEPCase type 1 family. Requires Mg(2+) as cofactor.

It carries out the reaction oxaloacetate + phosphate = phosphoenolpyruvate + hydrogencarbonate. Functionally, forms oxaloacetate, a four-carbon dicarboxylic acid source for the tricarboxylic acid cycle. The polypeptide is Phosphoenolpyruvate carboxylase (Bordetella pertussis (strain Tohama I / ATCC BAA-589 / NCTC 13251)).